A 528-amino-acid chain; its full sequence is Phosphoenolpyruvate carboxykinase (ATP) (528 aa).

Positions 56, 192, and 198 each coordinate substrate. ATP is bound by residues lysine 198, histidine 217, and 233-241 (GLSGTGKTT). Mn(2+) contacts are provided by lysine 198 and histidine 217. Aspartate 254 serves as a coordination point for Mn(2+). 3 residues coordinate ATP: glutamate 282, arginine 319, and threonine 444. Position 319 (arginine 319) interacts with substrate.

The protein belongs to the phosphoenolpyruvate carboxykinase (ATP) family. Mn(2+) serves as cofactor.

Its subcellular location is the cytoplasm. The catalysed reaction is oxaloacetate + ATP = phosphoenolpyruvate + ADP + CO2. It participates in carbohydrate biosynthesis; gluconeogenesis. Involved in the gluconeogenesis. Catalyzes the conversion of oxaloacetate (OAA) to phosphoenolpyruvate (PEP) through direct phosphoryl transfer between the nucleoside triphosphate and OAA. The polypeptide is Phosphoenolpyruvate carboxykinase (ATP) (Bacillus mycoides (strain KBAB4) (Bacillus weihenstephanensis)).